A 459-amino-acid polypeptide reads, in one-letter code: Chromosomal replication initiator protein DnaA (459 aa).

The segment at 1-74 (MQKIETFWHF…DEMAQDHFNE (74 aa)) is domain I, interacts with DnaA modulators. The domain II stretch occupies residues 74–122 (ERISFRLELREPAESEAQTVRTSAQKNREDKKPAAEKTQGVTSRKTNPS). Residues 87 to 122 (ESEAQTVRTSAQKNREDKKPAAEKTQGVTSRKTNPS) are disordered. Positions 89–98 (EAQTVRTSAQ) are enriched in polar residues. Residues 99-108 (KNREDKKPAA) show a composition bias toward basic and acidic residues. Over residues 112–122 (QGVTSRKTNPS) the composition is skewed to polar residues. The domain III, AAA+ region stretch occupies residues 123–339 (QLNASFTFDA…GALKRVLAFS (217 aa)). ATP contacts are provided by glycine 167, glycine 169, lysine 170, and threonine 171. The tract at residues 340–459 (RFTGHSISLD…FNALMHILRG (120 aa)) is domain IV, binds dsDNA.

The protein belongs to the DnaA family. As to quaternary structure, oligomerizes as a right-handed, spiral filament on DNA at oriC.

Its subcellular location is the cytoplasm. Its function is as follows. Plays an essential role in the initiation and regulation of chromosomal replication. ATP-DnaA binds to the origin of replication (oriC) to initiate formation of the DNA replication initiation complex once per cell cycle. Binds the DnaA box (a 9 base pair repeat at the origin) and separates the double-stranded (ds)DNA. Forms a right-handed helical filament on oriC DNA; dsDNA binds to the exterior of the filament while single-stranded (ss)DNA is stabiized in the filament's interior. The ATP-DnaA-oriC complex binds and stabilizes one strand of the AT-rich DNA unwinding element (DUE), permitting loading of DNA polymerase. After initiation quickly degrades to an ADP-DnaA complex that is not apt for DNA replication. Binds acidic phospholipids. The sequence is that of Chromosomal replication initiator protein DnaA from Nitrosomonas europaea (strain ATCC 19718 / CIP 103999 / KCTC 2705 / NBRC 14298).